A 118-amino-acid polypeptide reads, in one-letter code: uncharacterized protein (118 aa).

3 helical membrane passes run 22–44 (IIASIVGAVIIAAAISALLFSIA), 54–71 (LSPLVYSIVSLAVIPVLR), and 78–99 (PILSLLTAFSIPILFLSGVEWL).

The protein resides in the cell membrane. This is an uncharacterized protein from Archaeoglobus fulgidus (strain ATCC 49558 / DSM 4304 / JCM 9628 / NBRC 100126 / VC-16).